Consider the following 53-residue polypeptide: Large ribosomal subunit protein eL40 (53 aa).

Belongs to the eukaryotic ribosomal protein eL40 family.

The polypeptide is Large ribosomal subunit protein eL40 (Pyrobaculum calidifontis (strain DSM 21063 / JCM 11548 / VA1)).